The primary structure comprises 502 residues: Type II methyltransferase M.HincII (502 aa).

This sequence belongs to the N(4)/N(6)-methyltransferase family.

The enzyme catalyses a 2'-deoxyadenosine in DNA + S-adenosyl-L-methionine = an N(6)-methyl-2'-deoxyadenosine in DNA + S-adenosyl-L-homocysteine + H(+). Its function is as follows. A gamma subtype methylase that recognizes the double-stranded sequence 5'-GTYRAC-3', methylates A-5 on both strands, and protects the DNA from cleavage by the HincII endonuclease. The chain is Type II methyltransferase M.HincII from Haemophilus influenzae.